Consider the following 364-residue polypeptide: tRNA 2-selenouridine synthase (364 aa).

Positions 14–137 (LIADTPIIDV…LRQTAIQATI (124 aa)) constitute a Rhodanese domain. The active-site S-selanylcysteine intermediate is Cys-97.

Belongs to the SelU family. In terms of assembly, monomer.

The enzyme catalyses 5-methylaminomethyl-2-thiouridine(34) in tRNA + selenophosphate + (2E)-geranyl diphosphate + H2O + H(+) = 5-methylaminomethyl-2-selenouridine(34) in tRNA + (2E)-thiogeraniol + phosphate + diphosphate. It catalyses the reaction 5-methylaminomethyl-2-thiouridine(34) in tRNA + (2E)-geranyl diphosphate = 5-methylaminomethyl-S-(2E)-geranyl-thiouridine(34) in tRNA + diphosphate. The catalysed reaction is 5-methylaminomethyl-S-(2E)-geranyl-thiouridine(34) in tRNA + selenophosphate + H(+) = 5-methylaminomethyl-2-(Se-phospho)selenouridine(34) in tRNA + (2E)-thiogeraniol. It carries out the reaction 5-methylaminomethyl-2-(Se-phospho)selenouridine(34) in tRNA + H2O = 5-methylaminomethyl-2-selenouridine(34) in tRNA + phosphate. Functionally, involved in the post-transcriptional modification of the uridine at the wobble position (U34) of tRNA(Lys), tRNA(Glu) and tRNA(Gln). Catalyzes the conversion of 2-thiouridine (S2U-RNA) to 2-selenouridine (Se2U-RNA). Acts in a two-step process involving geranylation of 2-thiouridine (S2U) to S-geranyl-2-thiouridine (geS2U) and subsequent selenation of the latter derivative to 2-selenouridine (Se2U) in the tRNA chain. This is tRNA 2-selenouridine synthase from Escherichia coli O127:H6 (strain E2348/69 / EPEC).